The sequence spans 362 residues: MRPYLLLTPGPLTTSESVKTAMMTDWCTWDEDYNVHIVEEIRKGLVQLATRKTDEYTSILMQGSGTYCVEATLGSVITPKHKLLILSNGAYGDRMGNIAEYHEMNYDMLAFDETEQVSVEYVDDYLAHNAEITHVAVVHCETTTGILNPLKEIAHMVKMHGKKLIVDAMSSFGGVPLDVEELGIDFMISSANKCIQGVPGFGFIIARKSELQYCKGVSKSLSLDIYDQWDAMEKGHGKWRFTSPTHVVRAFKQAMDELAAEGGVEARHARYCRNHDVLVEGMRSLGFKTLLKDEVQSPVITSFLYPDKEFDFKEFYHQLKEKGFVIYPGKISQADTFRIGNIGDVFPEDFSRLIEAIKTVAK.

Lys193 bears the N6-(pyridoxal phosphate)lysine mark.

It belongs to the class-V pyridoxal-phosphate-dependent aminotransferase family. PhnW subfamily. Homodimer. The cofactor is pyridoxal 5'-phosphate.

The enzyme catalyses (2-aminoethyl)phosphonate + pyruvate = phosphonoacetaldehyde + L-alanine. Functionally, involved in phosphonate degradation. This is 2-aminoethylphosphonate--pyruvate transaminase from Phocaeicola vulgatus (strain ATCC 8482 / DSM 1447 / JCM 5826 / CCUG 4940 / NBRC 14291 / NCTC 11154) (Bacteroides vulgatus).